Here is a 1036-residue protein sequence, read N- to C-terminus: Isoleucine--tRNA ligase (1036 aa).

A 'HIGH' region motif is present at residues 46 to 56 (PFATGLPHYGH). The 'KMSKS' region motif lies at 589–593 (KMSKR). Lysine 592 is an ATP binding site.

The protein belongs to the class-I aminoacyl-tRNA synthetase family. IleS type 2 subfamily. Monomer. Requires Zn(2+) as cofactor.

It is found in the cytoplasm. It catalyses the reaction tRNA(Ile) + L-isoleucine + ATP = L-isoleucyl-tRNA(Ile) + AMP + diphosphate. Functionally, catalyzes the attachment of isoleucine to tRNA(Ile). As IleRS can inadvertently accommodate and process structurally similar amino acids such as valine, to avoid such errors it has two additional distinct tRNA(Ile)-dependent editing activities. One activity is designated as 'pretransfer' editing and involves the hydrolysis of activated Val-AMP. The other activity is designated 'posttransfer' editing and involves deacylation of mischarged Val-tRNA(Ile). This chain is Isoleucine--tRNA ligase, found in Chlamydia trachomatis serovar L2b (strain UCH-1/proctitis).